The chain runs to 846 residues: MQGAGSRGAWIHSPSHCPGNGHGSPPAVAPQRRRLTRRPGYMRSTASPGIGFLSPAVGMPRPISAGLTGQEFYPSQSKARQCSLDLRSHCQDSLVGNPFLKGSLGPAVTSVGHLHPAQGSMRERMVHSGVHSGNDRRQSERLTGDSGCRQEFLSSDSSKSLASSLDVAWSKGSRGLKTVRPLVSPASNGPVDIPSLPGFQDTFTSNFSFIRLSLGAAGERGEAEGCLPSREAEPLHQSPQEMAAEGSGSDRPHGEPRHLWTFSLHAAPGLVDLAQGTRSNRQPECGMVSSSDAGFSSQDASPAGGRSDQDGGWADAHGWHALLREWEPMLQDYLLSNRRQLEVTSLILKLQKLQEKAVEDGDYDMAETLRQRLEDLEQEKGRLPWALPSQQPALRSFLGYLATQTHAALHGAPQRAGSDDPEAPLEGQRRTTAQDSLPGLAVTRRDWLMREKEQLQKEIEALRARVSVLEAKEQRLSQELEDQEMLLRWQGCDQMALVAQLSPGQLQEVSKALGETLTSARWAPFRVEPPETLRSLRERTKSLDLAVRELTEQVCSGEKLCSSLRKRLADLDTRLPALLEAKMLALSGSCFSTAKELAEEIWAVSSEREGLEMFLGRLLALSSRNTRRLGSVKEDYLRCRQDLALQEAAHKTRVKANTVKCTEVLEGQLSCCRCPLLERVWKADLEACQLLMQSLEIQEAGSSSHVEDEKQVHSTGEAAQTAALAVPRTPHPEEEKSPLQVLCEWNTYSASLPHCAAGLWKEESHVVFAEVGDKCEAIGMRLLHLEDQLLGAMHGHDEALFQSLQGELQMVKETLQTMFLQLQPAKEAGGEASASYSTAGAQEAED.

5 disordered regions span residues 1-53, 127-147, 231-257, 277-312, and 409-436; these read MQGA…IGFL, HSGV…GDSG, EAEP…GEPR, TRSN…QDGG, and LHGA…AQDS. The tract at residues 1 to 288 is interaction with MAP1A; that stretch reads MQGAGSRGAW…SNRQPECGMV (288 aa). Basic and acidic residues-rich tracts occupy residues 133–143 and 248–257; these read GNDRRQSERLT and GSDRPHGEPR. Polar residues predominate over residues 277 to 300; sequence TRSNRQPECGMVSSSDAGFSSQDA. The tract at residues 289-686 is interaction with TRAF3IP1; sequence SSSDAGFSSQ…LERVWKADLE (398 aa). The required for localization to punctate cytoplasmic foci stretch occupies residues 429–587; sequence RRTTAQDSLP…LLEAKMLALS (159 aa). Residues 435 to 846 are necessary and sufficient for interaction with PCNT and localization at the centrosome; it reads DSLPGLAVTR…STAGAQEAED (412 aa). Positions 440-489 form a coiled coil; it reads LAVTRRDWLMREKEQLQKEIEALRARVSVLEAKEQRLSQELEDQEMLLRW. The interaction with ATF4 and ATF5 stretch occupies residues 588 to 846; the sequence is GSCFSTAKEL…STAGAQEAED (259 aa). The interaction with NDEL1 and PAFAH1B1 stretch occupies residues 721-846; the sequence is TAALAVPRTP…STAGAQEAED (126 aa). Residues 721 to 846 form an interaction with PAFAH1B1 region; it reads TAALAVPRTP…STAGAQEAED (126 aa). The segment at 795–828 is interaction with NDEL1; sequence GHDEALFQSLQGELQMVKETLQTMFLQLQPAKEA.

Interacts with NDEL1. Interacts with CCDC88A (via C-terminus); the interaction is direct. Interacts with GSK3B. Interacts with tubulin alpha, ACTN2, ANKHD1, ATF4, ATF5, CEP63, EIF3S3, MAP1A, NDEL1, PAFAH1B1, RANBP9, SPTBN4, SYNE1 and TRAF3IP1. Interaction with microtubules may be mediated in part by TRAF3IP1. Interacts (via C-terminal) with PCNT. Interacts with CHCHD6. Interacts with CCDC141. Interacts with FBXW7, the substrate-recognition component of a SCF (SKP1-CUL1-F-box protein) E3 ubiquitin-protein ligase complex; the interaction targets DISC1 for proteasomal degradation. Interacts with ZNF365. Interacts with ATF4; inhibiting ATF4 transcription factor activity by disrupting ATF4 dimerization and DNA-binding. Interacts with PDE4B. In terms of processing, ubiquitinated. Ubiquitination with 'Lys-48'-linked polyubiquitin chains leads to its proteasomal degradation. In terms of tissue distribution, expressed in brain, heart, kidney, liver and thymus. Within the brain expression is high in the cerebral cortex, hippocampus and olfactory bulb and is also seen at lower levels in the cerebellum (at protein level).

The protein localises to the cytoplasm. It is found in the cytoskeleton. The protein resides in the mitochondrion. It localises to the microtubule organizing center. Its subcellular location is the centrosome. The protein localises to the postsynaptic density. In terms of biological role, involved in the regulation of multiple aspects of embryonic and adult neurogenesis. Required for neural progenitor proliferation in the ventrical/subventrical zone during embryonic brain development and in the adult dentate gyrus of the hippocampus. Participates in the Wnt-mediated neural progenitor proliferation as a positive regulator by modulating GSK3B activity and CTNNB1 abundance. Plays a role as a modulator of the AKT-mTOR signaling pathway controlling the tempo of the process of newborn neurons integration during adult neurogenesis, including neuron positioning, dendritic development and synapse formation. Inhibits the activation of AKT-mTOR signaling upon interaction with CCDC88A. Regulates the migration of early-born granule cell precursors toward the dentate gyrus during the hippocampal development. Inhibits ATF4 transcription factor activity in neurons by disrupting ATF4 dimerization and DNA-binding. Plays a role, together with PCNT, in the microtubule network formation. This Rattus norvegicus (Rat) protein is Disrupted in schizophrenia 1 homolog.